Reading from the N-terminus, the 405-residue chain is Scarecrow-like protein 23 (405 aa).

A disordered region spans residues 1-20; sequence MTTKRIDRDLPSSDDPSSAK. Residues 31–400 form the GRAS domain; it reads ENDGAAAIKL…LSLLTASAWK (370 aa). Residues 38 to 102 are leucine repeat I (LRI); sequence IKLLSLLLQC…ISSYLSGACS (65 aa). Residues 45-49 carry the LxCxE motif motif; sequence LQCAE. Residues 121–186 form a VHIID region; sequence LQTYNSVSPL…RKLRSIRITG (66 aa). The VHIID signature appears at 152–156; that stretch reads VHIID. The tract at residues 196–228 is leucine repeat II (LRII); sequence STGRRLADFASSLNLPFEFHPIEGIIGNLIDPS. The segment at 238-327 is PFYRE; the sequence is VVVHWMQHRL…QIVLGTEIRN (90 aa). The segment at 330–400 is SAW; sequence AHGGGRRKRM…LSLLTASAWK (71 aa).

Belongs to the GRAS family. As to quaternary structure, interacts with SHR. In terms of tissue distribution, expressed in seedlings, cotyledons, shoot apex, leaves and flowers.

Its subcellular location is the nucleus. Its function is as follows. Probable transcription factor involved in plant development. In Arabidopsis thaliana (Mouse-ear cress), this protein is Scarecrow-like protein 23 (SCL23).